The following is a 318-amino-acid chain: Ubiquitin-like domain-containing CTD phosphatase 1 (318 aa).

A Ubiquitin-like domain is found at 3–81 (LSLIIKWGGQ…IMMMGTREES (79 aa)). Positions 133-294 (PREGKKLLVL…VKLSQYLKEI (162 aa)) constitute an FCP1 homology domain. Asp143, Asp145, and Asp253 together coordinate Mg(2+).

Requires Mg(2+) as cofactor.

It is found in the nucleus. The catalysed reaction is O-phospho-L-seryl-[protein] + H2O = L-seryl-[protein] + phosphate. It catalyses the reaction O-phospho-L-threonyl-[protein] + H2O = L-threonyl-[protein] + phosphate. Dephosphorylates 26S nuclear proteasomes, thereby decreasing their proteolytic activity. Recruited to the 19S regulatory particle of the 26S proteasome where it dephosphorylates 19S component psmc2 which impairs psmc2 ATPase activity and disrupts 26S proteasome assembly. Has also been reported to stimulate the proteolytic activity of the 26S proteasome. The sequence is that of Ubiquitin-like domain-containing CTD phosphatase 1 (ublcp1) from Xenopus laevis (African clawed frog).